The sequence spans 353 residues: Photosystem II D2 protein (353 aa).

Threonine 2 is subject to N-acetylthreonine. The residue at position 2 (threonine 2) is a Phosphothreonine. A helical membrane pass occupies residues 41–61 (CAYFSLGGWFTGTTFVTSWYT). Residue histidine 118 coordinates chlorophyll a. A helical membrane pass occupies residues 125 to 141 (GFMLRQFELARSVQLRP). 2 residues coordinate pheophytin a: glutamine 130 and asparagine 143. The chain crosses the membrane as a helical span at residues 153 to 166 (VFVSVFLIYPLGQS). Chlorophyll a is bound at residue histidine 198. The chain crosses the membrane as a helical span at residues 208–228 (AALLCAIHGATVENTLFEDGD). A plastoquinone is bound by residues histidine 215 and phenylalanine 262. Histidine 215 contributes to the Fe cation binding site. Histidine 269 contacts Fe cation. The chain crosses the membrane as a helical span at residues 279–295 (GLWMSAIGVVGLALNLR).

Belongs to the reaction center PufL/M/PsbA/D family. In terms of assembly, PSII is composed of 1 copy each of membrane proteins PsbA, PsbB, PsbC, PsbD, PsbE, PsbF, PsbH, PsbI, PsbJ, PsbK, PsbL, PsbM, PsbT, PsbX, PsbY, PsbZ, Psb30/Ycf12, at least 3 peripheral proteins of the oxygen-evolving complex and a large number of cofactors. It forms dimeric complexes. The D1/D2 heterodimer binds P680, chlorophylls that are the primary electron donor of PSII, and subsequent electron acceptors. It shares a non-heme iron and each subunit binds pheophytin, quinone, additional chlorophylls, carotenoids and lipids. There is also a Cl(-1) ion associated with D1 and D2, which is required for oxygen evolution. The PSII complex binds additional chlorophylls, carotenoids and specific lipids. is required as a cofactor.

The protein localises to the plastid. It localises to the chloroplast thylakoid membrane. The enzyme catalyses 2 a plastoquinone + 4 hnu + 2 H2O = 2 a plastoquinol + O2. Functionally, photosystem II (PSII) is a light-driven water:plastoquinone oxidoreductase that uses light energy to abstract electrons from H(2)O, generating O(2) and a proton gradient subsequently used for ATP formation. It consists of a core antenna complex that captures photons, and an electron transfer chain that converts photonic excitation into a charge separation. The D1/D2 (PsbA/PsbD) reaction center heterodimer binds P680, the primary electron donor of PSII as well as several subsequent electron acceptors. D2 is needed for assembly of a stable PSII complex. The sequence is that of Photosystem II D2 protein from Physcomitrium patens (Spreading-leaved earth moss).